We begin with the raw amino-acid sequence, 1104 residues long: Lon protease homolog, mitochondrial (1104 aa).

The N-terminal 58 residues, 1-58, are a transit peptide targeting the mitochondrion; that stretch reads MLPLRAFARLAQRPRLSRPTQLARSSLPRPSPSRPAAHYLALAPAPSTRFLHSSPPVL. Disordered regions lie at residues 8–144 and 275–295; these read ARLA…KEVA and EGSQ…SEVP. The segment covering 22 to 46 has biased composition (low complexity); it reads LARSSLPRPSPSRPAAHYLALAPAP. The segment covering 80-103 has biased composition (basic and acidic residues); it reads KQDDQVEKPLPDAESSKSAEERAK. Low complexity predominate over residues 104–128; the sequence is SQSSKPDIKASSSDSVSSSAPAPGS. Residues 129-139 show a composition bias toward gly residues; sequence ADGGSPPGAGG. In terms of domain architecture, Lon N-terminal spans 155-444; it reads VLAIPITHRP…RALVLLKKEL (290 aa). Residues 281–291 are compositionally biased toward basic and acidic residues; it reads AKGEGEVKSFE. 597-604 is a binding site for ATP; sequence GPPGVGKT. The Lon proteolytic domain occupies 895-1082; sequence SPPAGVSTGL…RQVLHEAFRG (188 aa). Active-site residues include serine 987 and lysine 1030.

It belongs to the peptidase S16 family. As to quaternary structure, homohexamer or homoheptamer. Organized in a ring with a central cavity.

The protein localises to the mitochondrion matrix. The enzyme catalyses Hydrolysis of proteins in presence of ATP.. ATP-dependent serine protease that mediates the selective degradation of misfolded, unassembled or oxidatively damaged polypeptides as well as certain short-lived regulatory proteins in the mitochondrial matrix. May also have a chaperone function in the assembly of inner membrane protein complexes. Participates in the regulation of mitochondrial gene expression and in the maintenance of the integrity of the mitochondrial genome. Binds to mitochondrial DNA in a site-specific manner. This is Lon protease homolog, mitochondrial from Cryptococcus neoformans var. neoformans serotype D (strain JEC21 / ATCC MYA-565) (Filobasidiella neoformans).